We begin with the raw amino-acid sequence, 927 residues long: Band 3 anion transport protein (927 aa).

Methionine 1 is modified (N-acetylmethionine). The Cytoplasmic segment spans residues 1–420; sequence MGDMQDHEKV…LSDITDALSP (420 aa). Phosphoserine is present on serine 18. A phosphotyrosine mark is found at tyrosine 31 and tyrosine 56. A globular region spans residues 69–303; that stretch reads SQVYVELQEL…LGRAAATLMT (235 aa). An interaction with ANK1 region spans residues 190–199; it reads AVLTRSGAPS. A phosphoserine mark is found at serine 199 and serine 222. The interval 317 to 370 is dimerization arm; sequence RGELLSSLDSFLDCSLVLPPTEAPSEKALLNLVPVQKELLRKRYLPRPAKPDPN. The disordered stretch occupies residues 367–390; the sequence is PDPNLYEALDGGKEGPGDEDDPLR. Tyrosine 372 carries the post-translational modification Phosphotyrosine. A helical membrane pass occupies residues 421-444; that stretch reads QVLAAVIFIYFAALSPAVTFGGLL. The Extracellular portion of the chain corresponds to 445–452; the sequence is GEKTRNLM. Residues 453–473 traverse the membrane as a helical segment; sequence GVSELLISTAVQGILFALLGA. Residues 474-476 lie on the Cytoplasmic side of the membrane; that stretch reads QPL. The chain crosses the membrane as a discontinuously helical span at residues 477–493; that stretch reads LVLGFSGPLLVFEEAFY. At 494-502 the chain is on the extracellular side; that stretch reads SFCESNNLE. A helical membrane pass occupies residues 503-523; the sequence is YIVGRAWIGFWLILLVVLVVA. The Cytoplasmic portion of the chain corresponds to 524-535; sequence FEGSFLVQYISR. A helical membrane pass occupies residues 536 to 558; it reads YTQEIFSFLISLIFIYETFSKLI. Residues 559–586 lie on the Extracellular side of the membrane; the sequence is KIFQDYPLQESYAPVVMKPKPQGPVPNT. The chain crosses the membrane as a helical span at residues 587–607; sequence ALLSLVLMVGTFLLAMMLRKF. Topologically, residues 608-618 are cytoplasmic; the sequence is KNSTYFPGKLR. Residues 619–639 traverse the membrane as a helical segment; it reads RVIGDFGVPISILIMVLVDTF. Residues 640–679 are Extracellular-facing; that stretch reads IKNTYTQKLSVPDGLKVSNSSARGWVIHPLGLYNHFPKWM. Asparagine 658 is a glycosylation site (N-linked (GlcNAc...) asparagine). The helical transmembrane segment at 680 to 700 threads the bilayer; the sequence is MFASVLPALLVFILIFLESQI. The Cytoplasmic portion of the chain corresponds to 701 to 716; the sequence is TTLIVSKPERKMIKGS. A helical membrane pass occupies residues 717–735; that stretch reads GFHLDLLLVVGMGGVAALF. A discontinuously helical membrane pass occupies residues 736 to 753; it reads GMPWLSATTVRSVTHANA. Residues 754–776 lie on the Cytoplasmic side of the membrane; that stretch reads LTVMGKASGPGAAAQIQEVKEQR. A run of 2 helical transmembrane segments spans residues 777 to 797 and 798 to 816; these read ISGLLVSVLVGLSILMEPILS and RIPLAVLFGIFLYMGITSL. The Cytoplasmic portion of the chain corresponds to 817–854; it reads SGIQLFDRILLLFKPPKYHPDVPFVKRVKTWRMHLFTG. The discontinuously helical intramembrane region spans 855–885; sequence IQIICLAVLWVVKSTPASLALPFVLILTVPL. Cysteine 859 carries the S-palmitoyl cysteine lipid modification. At 886–927 the chain is on the cytoplasmic side; sequence RRLLLPLIFRELELQCLDGDDAKVTFDEAEGLDEYDEVPMPV. Tyrosine 920 is modified (phosphotyrosine).

This sequence belongs to the anion exchanger (TC 2.A.31) family. In terms of assembly, a dimer in solution, but in its membrane environment, it exists primarily as a mixture of dimers and tetramers and spans the membrane asymmetrically. Component of the ankyrin-1 complex in the erythrocyte, composed of ANK1, RHCE, RHAG, SLC4A1, EPB42, GYPA, GYPB and AQP1. Interacts with STOM; this interaction positively regulates SLC4A1 activity. Interacts with GYPA; a GYPA monomer is bound at each end of the SLC4A1 dimer forming a heterotetramer. Three SLC4A1 dimers (Band 3-I, Band 3-II and Band 3-III) participates in the ankyrin-1 complex. Interacts (via the cytoplasmic domain) with EPB42; this interaction is mediated by the SLC4A1 Band 3-I dimer. Interacts (via the cytoplasmic domain) directly with ANK1; this interaction is mediated by the SLC4A1 Band 3-II and Band 3-III dimers. Interacts with TMEM139. Kidney.

It is found in the cell membrane. Its subcellular location is the basolateral cell membrane. It catalyses the reaction hydrogencarbonate(in) + chloride(out) = hydrogencarbonate(out) + chloride(in). In terms of biological role, functions both as a transporter that mediates electroneutral anion exchange across the cell membrane and as a structural protein. Component of the ankyrin-1 complex of the erythrocyte membrane; required for normal flexibility and stability of the erythrocyte membrane and for normal erythrocyte shape via the interactions of its cytoplasmic domain with cytoskeletal proteins, glycolytic enzymes, and hemoglobin. Functions as a transporter that mediates the 1:1 exchange of inorganic anions across the erythrocyte membrane. Mediates chloride-bicarbonate exchange in the kidney, and is required for normal acidification of the urine. In Rattus norvegicus (Rat), this protein is Band 3 anion transport protein.